The primary structure comprises 39 residues: Anthranilate phosphoribosyltransferase (39 aa).

The protein belongs to the anthranilate phosphoribosyltransferase family. In terms of assembly, homodimer.

It carries out the reaction N-(5-phospho-beta-D-ribosyl)anthranilate + diphosphate = 5-phospho-alpha-D-ribose 1-diphosphate + anthranilate. It participates in amino-acid biosynthesis; L-tryptophan biosynthesis; L-tryptophan from chorismate: step 2/5. In terms of biological role, catalyzes the transfer of the phosphoribosyl group of 5-phosphorylribose-1-pyrophosphate (PRPP) to anthranilate to yield N-(5'-phosphoribosyl)-anthranilate (PRA). This chain is Anthranilate phosphoribosyltransferase (trpD), found in Pectobacterium carotovorum (Erwinia carotovora).